The chain runs to 187 residues: Protein SCM4 (187 aa).

A run of 3 helical transmembrane segments spans residues 11–31 (IAVSSLGLYAGILTSSTVISI), 45–65 (VLCTLGCWSTVLGGLATGAFG), and 80–100 (LLCGLGVAPLSAAYLYLVSLF). Positions 114–134 (DLEKQKDEKLPQHHPEVKDGE) are enriched in basic and acidic residues. The interval 114–135 (DLEKQKDEKLPQHHPEVKDGEA) is disordered. A helical membrane pass occupies residues 162 to 182 (MSLHMSIVTGITIFTFGKCIL).

The protein belongs to the ATG33 family.

It is found in the membrane. The sequence is that of Protein SCM4 (SCM4) from Saccharomyces cerevisiae (strain ATCC 204508 / S288c) (Baker's yeast).